Here is a 253-residue protein sequence, read N- to C-terminus: Chitooligosaccharide deacetylase (253 aa).

Positions 61 and 126 each coordinate Mg(2+).

This sequence belongs to the YdjC deacetylase family. ChbG subfamily. In terms of assembly, homodimer. Mg(2+) serves as cofactor.

The protein localises to the cytoplasm. The catalysed reaction is N,N'-diacetylchitobiose + H2O = N-acetyl-beta-D-glucosaminyl-(1-&gt;4)-D-glucosamine + acetate. It carries out the reaction diacetylchitobiose-6'-phosphate + H2O = N'-monoacetylchitobiose-6'-phosphate + acetate. It participates in glycan degradation; chitin degradation. In terms of biological role, involved in the degradation of chitin. ChbG is essential for growth on the acetylated chitooligosaccharides chitobiose and chitotriose but is dispensable for growth on cellobiose and chitosan dimer, the deacetylated form of chitobiose. Deacetylation of chitobiose-6-P and chitotriose-6-P is necessary for both the activation of the chb promoter by the regulatory protein ChbR and the hydrolysis of phosphorylated beta-glucosides by the phospho-beta-glucosidase ChbF. Catalyzes the removal of only one acetyl group from chitobiose-6-P to yield monoacetylchitobiose-6-P, the inducer of ChbR and the substrate of ChbF. The chain is Chitooligosaccharide deacetylase from Serratia marcescens.